We begin with the raw amino-acid sequence, 427 residues long: MTLWVLGLNHQTAPVELRERAAFAGEALPRALGSLRDTPQIAEAVLLSTCNRTELYAVADSAQALDQWLHTQAGDLQGYLYQHADAEAVRHLFRVATGLDSMVLGEPQILGQVKDAWSTARDHGLLGQRLDRLFQQTFSVAKRARTDTQVGANPVSVASAAVRLAQNAFARLDDSTVLLVGAGETIELAARHLSEGKVRRLLIANRTLAHAQELASRHGGVALPLTELDRHLGEADVVFSATAAREPVIHREMVAKALRTRRHKPMLLFDLAVPRDIEADVATLNDAFLYTVDDLERAVEDNRRGRREAAAEAEAIIDLQVSRFVETQQASAHQAPLRQLRAFGEATRTELLERARQQLANGKPADEVLELLAHGLTNRLLHPPTAALRAAALSGDADLTRAAERLFPATPGYRHPPVRPDDADPAP.

Substrate contacts are provided by residues 49-52 (TCNR), Ser-101, 106-108 (EPQ), and Gln-112. Cys-50 functions as the Nucleophile in the catalytic mechanism. 181–186 (GAGETI) serves as a coordination point for NADP(+). Positions 407 to 427 (FPATPGYRHPPVRPDDADPAP) are disordered. Basic and acidic residues predominate over residues 418–427 (VRPDDADPAP).

Belongs to the glutamyl-tRNA reductase family. Homodimer.

It catalyses the reaction (S)-4-amino-5-oxopentanoate + tRNA(Glu) + NADP(+) = L-glutamyl-tRNA(Glu) + NADPH + H(+). Its pathway is porphyrin-containing compound metabolism; protoporphyrin-IX biosynthesis; 5-aminolevulinate from L-glutamyl-tRNA(Glu): step 1/2. In terms of biological role, catalyzes the NADPH-dependent reduction of glutamyl-tRNA(Glu) to glutamate 1-semialdehyde (GSA). In Stenotrophomonas maltophilia (strain R551-3), this protein is Glutamyl-tRNA reductase.